The primary structure comprises 150 residues: Peptide methionine sulfoxide reductase MsrB (150 aa).

Residues 9-132 (EAELKRTLTK…NSAALKFIPF (124 aa)) form the MsrB domain. The Nucleophile role is filled by Cys-121.

Belongs to the MsrB Met sulfoxide reductase family.

It catalyses the reaction L-methionyl-[protein] + [thioredoxin]-disulfide + H2O = L-methionyl-(R)-S-oxide-[protein] + [thioredoxin]-dithiol. In Mycoplasma genitalium (strain ATCC 33530 / DSM 19775 / NCTC 10195 / G37) (Mycoplasmoides genitalium), this protein is Peptide methionine sulfoxide reductase MsrB.